Here is a 547-residue protein sequence, read N- to C-terminus: CTP synthase (547 aa).

Residues 1–266 are amidoligase domain; it reads MTKYIFVTGG…GDYLVERLGL (266 aa). Ser-13 is a binding site for CTP. UTP is bound at residue Ser-13. Residue 14-19 participates in ATP binding; the sequence is SVGKGI. Tyr-54 is an L-glutamine binding site. Asp-71 lines the ATP pocket. Positions 71 and 141 each coordinate Mg(2+). CTP is bound by residues 148-150, 187-192, and Lys-223; these read DIE and KTKPTQ. Residues 187 to 192 and Lys-223 contribute to the UTP site; that span reads KTKPTQ. Residues 291–533 enclose the Glutamine amidotransferase type-1 domain; that stretch reads PIALVGKYVE…IAAAAQTLLA (243 aa). Gly-353 contributes to the L-glutamine binding site. The active-site Nucleophile; for glutamine hydrolysis is Cys-380. Residues 381–384, Glu-404, and Arg-461 each bind L-glutamine; that span reads LGMQ. Active-site residues include His-506 and Glu-508.

This sequence belongs to the CTP synthase family. Homotetramer.

The enzyme catalyses UTP + L-glutamine + ATP + H2O = CTP + L-glutamate + ADP + phosphate + 2 H(+). It carries out the reaction L-glutamine + H2O = L-glutamate + NH4(+). It catalyses the reaction UTP + NH4(+) + ATP = CTP + ADP + phosphate + 2 H(+). It functions in the pathway pyrimidine metabolism; CTP biosynthesis via de novo pathway; CTP from UDP: step 2/2. Its activity is regulated as follows. Allosterically activated by GTP, when glutamine is the substrate; GTP has no effect on the reaction when ammonia is the substrate. The allosteric effector GTP functions by stabilizing the protein conformation that binds the tetrahedral intermediate(s) formed during glutamine hydrolysis. Inhibited by the product CTP, via allosteric rather than competitive inhibition. In terms of biological role, catalyzes the ATP-dependent amination of UTP to CTP with either L-glutamine or ammonia as the source of nitrogen. Regulates intracellular CTP levels through interactions with the four ribonucleotide triphosphates. The chain is CTP synthase from Chloroflexus aggregans (strain MD-66 / DSM 9485).